Consider the following 229-residue polypeptide: Wtf element wtf14 (229 aa).

A compositionally biased stretch (basic and acidic residues) spans 1-26 (MENNHHLAKDSLDELNPKRGKGEHET). Residues 1–27 (MENNHHLAKDSLDELNPKRGKGEHETQ) are disordered. The next 4 membrane-spanning stretches (helical) occupy residues 71-91 (IPAV…YLVF), 100-120 (VLFG…LLAT), 151-171 (LYAI…LMFF), and 188-208 (VIGV…PGLF).

Belongs to the WTF family.

Its subcellular location is the endoplasmic reticulum membrane. May act in meiotic drive. This Schizosaccharomyces kambucha (Fission yeast) protein is Wtf element wtf14.